The sequence spans 106 residues: Urease subunit beta (106 aa).

The protein belongs to the urease beta subunit family. As to quaternary structure, heterotrimer of UreA (gamma), UreB (beta) and UreC (alpha) subunits. Three heterotrimers associate to form the active enzyme.

It is found in the cytoplasm. It carries out the reaction urea + 2 H2O + H(+) = hydrogencarbonate + 2 NH4(+). It functions in the pathway nitrogen metabolism; urea degradation; CO(2) and NH(3) from urea (urease route): step 1/1. The chain is Urease subunit beta from Synechococcus sp. (strain WH7805).